The following is a 534-amino-acid chain: Ethanolamine kinase (534 aa).

Ser-23 bears the Phosphoserine mark.

Belongs to the choline/ethanolamine kinase family.

It localises to the cytoplasm. It catalyses the reaction ethanolamine + ATP = phosphoethanolamine + ADP + H(+). The enzyme catalyses choline + ATP = phosphocholine + ADP + H(+). The protein operates within phospholipid metabolism; phosphatidylethanolamine biosynthesis; phosphatidylethanolamine from ethanolamine: step 1/3. Catalyzes the committed step of phosphatidylethanolamine synthesis via the CDP-ethanolamine branch of the Kennedy pathway. Also exhibits choline kinase activity, thus contributing to phosphatidylcholine synthesis via the CDP-choline pathway, but its preferred substrate is ethanolamine. The polypeptide is Ethanolamine kinase (EKI1) (Saccharomyces cerevisiae (strain ATCC 204508 / S288c) (Baker's yeast)).